A 243-amino-acid polypeptide reads, in one-letter code: Probable transcriptional regulatory protein BAV2207 (243 aa).

The interval 1-21 is disordered; sequence MAGHSKWANIQHRKGRQDAKR.

Belongs to the TACO1 family.

It is found in the cytoplasm. The chain is Probable transcriptional regulatory protein BAV2207 from Bordetella avium (strain 197N).